The sequence spans 456 residues: Adenylyltransferase and sulfurtransferase uba4 (456 aa).

Residues Gly-101, Asp-122, 129–133, Lys-146, and 161–162 each bind ATP; these read SNLHR and DH. Residues Cys-210 and Cys-213 each contribute to the Zn(2+) site. The active-site Glycyl thioester intermediate; for adenylyltransferase activity is Cys-227. The Zn(2+) site is built by Cys-300 and Cys-303. The Rhodanese domain maps to 350–454; the sequence is KEKEHLLIDV…WKEQVDGSWP (105 aa). Catalysis depends on Cys-409, which acts as the Cysteine persulfide intermediate; for sulfurtransferase activity.

This sequence in the N-terminal section; belongs to the HesA/MoeB/ThiF family. UBA4 subfamily. Zn(2+) is required as a cofactor.

It is found in the cytoplasm. The protein localises to the cytosol. The catalysed reaction is [molybdopterin-synthase sulfur-carrier protein]-C-terminal Gly-Gly + ATP + H(+) = [molybdopterin-synthase sulfur-carrier protein]-C-terminal Gly-Gly-AMP + diphosphate. It catalyses the reaction [molybdopterin-synthase sulfur-carrier protein]-C-terminal Gly-Gly-AMP + S-sulfanyl-L-cysteinyl-[cysteine desulfurase] + AH2 = [molybdopterin-synthase sulfur-carrier protein]-C-terminal-Gly-aminoethanethioate + L-cysteinyl-[cysteine desulfurase] + A + AMP + 2 H(+). Its pathway is tRNA modification; 5-methoxycarbonylmethyl-2-thiouridine-tRNA biosynthesis. Its function is as follows. Plays a central role in 2-thiolation of mcm(5)S(2)U at tRNA wobble positions of cytosolic tRNA(Lys), tRNA(Glu) and tRNA(Gln). Also essential during biosynthesis of the molybdenum cofactor. Acts by mediating the C-terminal thiocarboxylation of sulfur carriers urm1 and mocs2a. Its N-terminus first activates urm1 and mocs2a as acyl-adenylates (-COAMP), then the persulfide sulfur on the catalytic cysteine is transferred to urm1 and mocs2a to form thiocarboxylation (-COSH) of their C-terminus. The reaction probably involves hydrogen sulfide that is generated from the persulfide intermediate and that acts as a nucleophile towards urm1 and mocs2a. Subsequently, a transient disulfide bond is formed. Does not use thiosulfate as sulfur donor; nfs1 probably acting as a sulfur donor for thiocarboxylation reactions. In Sclerotinia sclerotiorum (strain ATCC 18683 / 1980 / Ss-1) (White mold), this protein is Adenylyltransferase and sulfurtransferase uba4.